We begin with the raw amino-acid sequence, 418 residues long: MFPKSMSIAEFDPEIKAAIEAEEVRQEEHIELIASENYASPRVMEAQGSVLTNKYAEGYPGKRYYGGCENVDVVEQLAIDRACELFGADWANVQPHSGSQANGAVYMAMLKAGDTVLGMSLDAGGHLTHGAKPNFSGKTYNAVQYGLDNETGLIDYDQVASLAREHKPKMIVAGFSAYSQIVDWQRFRDIADEVGAILLVDMAHVAGLVAAGVYPSPVGIADITTTTTHKTLGGPRGGLIMGKASEEIQKKINSAVFPGGQGGPLEHVIAAKAICFKEAMQDDFKGYQQQVVKNAQAMAGVFIERGFDVVSNGTENHLFLLSLIKQDITGKDADAALGRANITVNKNAVPNDPRSPFVTSGLRIGSPSITRRGFDEADAKALAGWICDILENMGDEGVIEQVKGKVKEICARLPVYER.

Residues Leu-121 and 125 to 127 (GHL) contribute to the (6S)-5,6,7,8-tetrahydrofolate site. The residue at position 230 (Lys-230) is an N6-(pyridoxal phosphate)lysine. 355–357 (SPF) lines the (6S)-5,6,7,8-tetrahydrofolate pocket.

This sequence belongs to the SHMT family. Homodimer. Requires pyridoxal 5'-phosphate as cofactor.

It is found in the cytoplasm. It carries out the reaction (6R)-5,10-methylene-5,6,7,8-tetrahydrofolate + glycine + H2O = (6S)-5,6,7,8-tetrahydrofolate + L-serine. It participates in one-carbon metabolism; tetrahydrofolate interconversion. The protein operates within amino-acid biosynthesis; glycine biosynthesis; glycine from L-serine: step 1/1. Its function is as follows. Catalyzes the reversible interconversion of serine and glycine with tetrahydrofolate (THF) serving as the one-carbon carrier. This reaction serves as the major source of one-carbon groups required for the biosynthesis of purines, thymidylate, methionine, and other important biomolecules. Also exhibits THF-independent aldolase activity toward beta-hydroxyamino acids, producing glycine and aldehydes, via a retro-aldol mechanism. The protein is Serine hydroxymethyltransferase of Alcanivorax borkumensis (strain ATCC 700651 / DSM 11573 / NCIMB 13689 / SK2).